The following is a 344-amino-acid chain: 4-dimethylallyltryptophan N-methyltransferase easF (344 aa).

The protein belongs to the methyltransferase superfamily. As to quaternary structure, homodimer.

It carries out the reaction 4-(3-methylbut-2-enyl)-L-tryptophan + S-adenosyl-L-methionine = 4-(3-methylbut-2-enyl)-L-abrine + S-adenosyl-L-homocysteine + H(+). Its pathway is alkaloid biosynthesis; ergot alkaloid biosynthesis. 4-dimethylallyltryptophan N-methyltransferase; part of the gene cluster that mediates the biosynthesis of fungal ergot alkaloid ergovaline, the predominant ergopeptine product in E.festucae var. lolii. DmaW catalyzes the first step of ergot alkaloid biosynthesis by condensing dimethylallyl diphosphate (DMAP) and tryptophan to form 4-dimethylallyl-L-tryptophan. The second step is catalyzed by the methyltransferase easF that methylates 4-dimethylallyl-L-tryptophan in the presence of S-adenosyl-L-methionine, resulting in the formation of 4-dimethylallyl-L-abrine. The catalase easC and the FAD-dependent oxidoreductase easE then transform 4-dimethylallyl-L-abrine to chanoclavine-I which is further oxidized by easD in the presence of NAD(+), resulting in the formation of chanoclavine-I aldehyde. Agroclavine dehydrogenase easG then mediates the conversion of chanoclavine-I aldehyde to agroclavine via a non-enzymatic adduct reaction: the substrate is an iminium intermediate that is formed spontaneously from chanoclavine-I aldehyde in the presence of glutathione. The presence of easA is not required to complete this reaction. Further conversion of agroclavine to paspalic acid is a two-step process involving oxidation of agroclavine to elymoclavine and of elymoclavine to paspalic acid, the second step being performed by the elymoclavine oxidase cloA. Paspalic acid is then further converted to D-lysergic acid. Ergovaline is assembled from D-lysergic acid and three different amino acids by the D-lysergyl-peptide-synthetase composed of a monomudular (lpsB) and a trimodular (lpsA) nonribosomal peptide synthetase subunit. This is 4-dimethylallyltryptophan N-methyltransferase easF from Epichloe festucae var. lolii (Neotyphodium lolii).